The following is a 188-amino-acid chain: Adenine phosphoribosyltransferase (188 aa).

Belongs to the purine/pyrimidine phosphoribosyltransferase family. As to quaternary structure, homodimer.

The protein resides in the cytoplasm. The catalysed reaction is AMP + diphosphate = 5-phospho-alpha-D-ribose 1-diphosphate + adenine. It functions in the pathway purine metabolism; AMP biosynthesis via salvage pathway; AMP from adenine: step 1/1. In terms of biological role, catalyzes a salvage reaction resulting in the formation of AMP, that is energically less costly than de novo synthesis. This is Adenine phosphoribosyltransferase from Burkholderia vietnamiensis (strain G4 / LMG 22486) (Burkholderia cepacia (strain R1808)).